The sequence spans 281 residues: Probable endonuclease 4 (281 aa).

Zn(2+)-binding residues include His67, His107, Glu142, Asp176, His179, His211, Asp224, His226, and Glu256.

The protein belongs to the AP endonuclease 2 family. Zn(2+) is required as a cofactor.

It catalyses the reaction Endonucleolytic cleavage to 5'-phosphooligonucleotide end-products.. In terms of biological role, endonuclease IV plays a role in DNA repair. It cleaves phosphodiester bonds at apurinic or apyrimidinic (AP) sites, generating a 3'-hydroxyl group and a 5'-terminal sugar phosphate. This is Probable endonuclease 4 from Alkaliphilus oremlandii (strain OhILAs) (Clostridium oremlandii (strain OhILAs)).